The following is a 591-amino-acid chain: Aspartate--tRNA(Asp/Asn) ligase (591 aa).

Glu-175 serves as a coordination point for L-aspartate. Positions 199–202 (QQFK) are aspartate. L-aspartate contacts are provided by Arg-221 and His-453. 221-223 (RDE) contacts ATP. Glu-486 contributes to the ATP binding site. An L-aspartate-binding site is contributed by Arg-493. Position 538–541 (538–541 (GIDR)) interacts with ATP.

It belongs to the class-II aminoacyl-tRNA synthetase family. Type 1 subfamily. In terms of assembly, homodimer.

Its subcellular location is the cytoplasm. It catalyses the reaction tRNA(Asx) + L-aspartate + ATP = L-aspartyl-tRNA(Asx) + AMP + diphosphate. Functionally, aspartyl-tRNA synthetase with relaxed tRNA specificity since it is able to aspartylate not only its cognate tRNA(Asp) but also tRNA(Asn). Reaction proceeds in two steps: L-aspartate is first activated by ATP to form Asp-AMP and then transferred to the acceptor end of tRNA(Asp/Asn). The protein is Aspartate--tRNA(Asp/Asn) ligase of Cereibacter sphaeroides (strain ATCC 17025 / ATH 2.4.3) (Rhodobacter sphaeroides).